Here is a 216-residue protein sequence, read N- to C-terminus: Large ribosomal subunit protein eL15 (216 aa).

Residues 170–188 show a composition bias toward basic residues; that stretch reads RGLRKSKGFKGTVKHKWSR. A disordered region spans residues 170–201; the sequence is RGLRKSKGFKGTVKHKWSRKQKEREEKKRHEA. Residues 189-201 are compositionally biased toward basic and acidic residues; that stretch reads KQKEREEKKRHEA.

The protein belongs to the eukaryotic ribosomal protein eL15 family.

The polypeptide is Large ribosomal subunit protein eL15 (Saccharolobus islandicus (strain M.16.27) (Sulfolobus islandicus)).